The sequence spans 162 residues: Large ribosomal subunit protein uL15 (162 aa).

Basic and acidic residues predominate over residues 1 to 13 (MNLNELRDNEGSR). Residues 1–39 (MNLNELRDNEGSRYRKKRLGRGIGSGKGKTSGRGVKGQK) are disordered. Residues 21–35 (RGIGSGKGKTSGRGV) are compositionally biased toward gly residues.

It belongs to the universal ribosomal protein uL15 family. In terms of assembly, part of the 50S ribosomal subunit.

Binds to the 23S rRNA. The chain is Large ribosomal subunit protein uL15 from Gluconobacter oxydans (strain 621H) (Gluconobacter suboxydans).